Reading from the N-terminus, the 319-residue chain is MERTNCSAASTVVETAVGTMLTLECVLGLMGNAVALWTFFYRLKVWKPYAVYLFNLVVADLLLATSLPFFAAFYLKGKTWKLGHMPCQVLLFLLAFSRGVGVAFLTTVALDRYLRVVHPRLRVNLLSLRAAWGISSLIWLLMVVLTPQNLLTCRTTQNSTECPSFYPTGGAKAIATCQEVLFFLQVLLPFGLISFCNSGLIRTLQKRLRESDKQPRIRRARVLVAIVLLLFGLCFLPSVLTRVLVHIFQEFKSCSVQQAIVRASDIAGSLTCLHSTLSPAIYCFSNPAFTHSYRKVLKSLRGRRKAAESPSDNLRDSYS.

Residues 1–16 are Extracellular-facing; sequence MERTNCSAASTVVETA. The N-linked (GlcNAc...) asparagine glycan is linked to Asn-5. A helical membrane pass occupies residues 17-37; the sequence is VGTMLTLECVLGLMGNAVALW. The Cytoplasmic segment spans residues 38–52; the sequence is TFFYRLKVWKPYAVY. A helical membrane pass occupies residues 53 to 73; sequence LFNLVVADLLLATSLPFFAAF. The Extracellular segment spans residues 74–91; sequence YLKGKTWKLGHMPCQVLL. Residues 92–110 traverse the membrane as a helical segment; that stretch reads FLLAFSRGVGVAFLTTVAL. Topologically, residues 111–131 are cytoplasmic; sequence DRYLRVVHPRLRVNLLSLRAA. Residues 132–152 traverse the membrane as a helical segment; the sequence is WGISSLIWLLMVVLTPQNLLT. Over 153-180 the chain is Extracellular; the sequence is CRTTQNSTECPSFYPTGGAKAIATCQEV. The helical transmembrane segment at 181 to 201 threads the bilayer; sequence LFFLQVLLPFGLISFCNSGLI. Residues 202–219 are Cytoplasmic-facing; that stretch reads RTLQKRLRESDKQPRIRR. A helical transmembrane segment spans residues 220–240; the sequence is ARVLVAIVLLLFGLCFLPSVL. At 241–265 the chain is on the extracellular side; sequence TRVLVHIFQEFKSCSVQQAIVRASD. Residues 266–284 traverse the membrane as a helical segment; sequence IAGSLTCLHSTLSPAIYCF. Topologically, residues 285-319 are cytoplasmic; it reads SNPAFTHSYRKVLKSLRGRRKAAESPSDNLRDSYS.

It belongs to the G-protein coupled receptor 1 family. As to quaternary structure, interacts with KRAS; in a farnesylation-dependent manner.

The protein localises to the cell membrane. High-affinity receptor for 12-(S)-hydroxy-5,8,10,14-eicosatetraenoic acid (12-S-HETE), with much lower affinities for other HETE isomers. 12-S-HETE is a eicosanoid, a 12-lipoxygenase (ALOX12) metabolite of arachidonic acid, involved in many physiologic and pathologic processes, such as cell growth, adhesion, inflammation and cancer promotion. 12-S-HETE-binding leads to activation of ERK1/2 (MAPK3/MAPK1), MEK, and NF-kappa-B pathways and leads to cell growth. Plays a crucial role for proliferation, survival and macropinocytosis of KRAS-dependent cancer cells by mediating the translocation of KRAS from the endoplasmic reticulum to the plasma membrane (PM) and its association with the PM. Contributes to enhanced immune responses by inducing dendrite protrusion of small intestinal CX3CR1(+) phagocytes for the uptake of luminal antigens. Also acts as a key receptor for 12-(S)-HETE-mediated liver ischemia reperfusion injury. Functionally, proton-sensing G protein-coupled receptor. The chain is 12-(S)-hydroxy-5,8,10,14-eicosatetraenoic acid receptor (Gpr31) from Mus musculus (Mouse).